Reading from the N-terminus, the 136-residue chain is Large ribosomal subunit protein uL16 (136 aa).

Belongs to the universal ribosomal protein uL16 family. Part of the 50S ribosomal subunit.

Its function is as follows. Binds 23S rRNA and is also seen to make contacts with the A and possibly P site tRNAs. This is Large ribosomal subunit protein uL16 from Karelsulcia muelleri (strain GWSS) (Sulcia muelleri).